We begin with the raw amino-acid sequence, 431 residues long: Glutamate-1-semialdehyde 2,1-aminomutase (431 aa).

N6-(pyridoxal phosphate)lysine is present on Lys-265.

The protein belongs to the class-III pyridoxal-phosphate-dependent aminotransferase family. HemL subfamily. Homodimer. Requires pyridoxal 5'-phosphate as cofactor.

The protein resides in the cytoplasm. It carries out the reaction (S)-4-amino-5-oxopentanoate = 5-aminolevulinate. It functions in the pathway porphyrin-containing compound metabolism; protoporphyrin-IX biosynthesis; 5-aminolevulinate from L-glutamyl-tRNA(Glu): step 2/2. The polypeptide is Glutamate-1-semialdehyde 2,1-aminomutase (Vibrio campbellii (strain ATCC BAA-1116)).